Reading from the N-terminus, the 676-residue chain is RNA helicase NPH-II (676 aa).

The Helicase ATP-binding domain occupies 172-347 (FSAWISHRPV…VFLPNPAFIH (176 aa)). 185 to 192 (GGTGVGKT) is an ATP binding site. The DEXH box signature appears at 296-299 (DEVH). In terms of domain architecture, Helicase C-terminal spans 366 to 542 (NPSSRMAYIE…KFNLTLPEDL (177 aa)).

This sequence belongs to the DEAD box helicase family. DEAH subfamily. In terms of assembly, monomer.

The protein localises to the virion. It catalyses the reaction ATP + H2O = ADP + phosphate + H(+). Functionally, NTP-dependent helicase that catalyzes unidirectional unwinding of 3'tailed duplex RNAs and plays an important role during transcription of early mRNAs, presumably by preventing R-loop formation behind the elongating RNA polymerase. Might also play a role in the export of newly synthesized mRNA chains out of the core into the cytoplasm. Required for replication and propagation of viral particles. This chain is RNA helicase NPH-II (OPG084), found in Homo sapiens (Human).